Reading from the N-terminus, the 113-residue chain is Large ribosomal subunit protein P1z (113 aa).

Residues 87–113 (AAAPAKEEKKDEPAEESDGDLGFGLFD) are disordered. S103 carries the phosphoserine modification.

It belongs to the eukaryotic ribosomal protein P1/P2 family. As to quaternary structure, P1 and P2 exist as dimers at the large ribosomal subunit.

Functionally, plays an important role in the elongation step of protein synthesis. In Arabidopsis thaliana (Mouse-ear cress), this protein is Large ribosomal subunit protein P1z (RPP1B).